Consider the following 166-residue polypeptide: NAD(P)H-quinone oxidoreductase subunit I, chloroplastic (166 aa).

4Fe-4S ferredoxin-type domains lie at 55 to 84 (GRIH…VDWK) and 95 to 124 (LNYS…MTEE). [4Fe-4S] cluster contacts are provided by Cys64, Cys67, Cys70, Cys74, Cys104, Cys107, Cys110, and Cys114.

Belongs to the complex I 23 kDa subunit family. As to quaternary structure, NDH is composed of at least 16 different subunits, 5 of which are encoded in the nucleus. [4Fe-4S] cluster is required as a cofactor.

It is found in the plastid. Its subcellular location is the chloroplast thylakoid membrane. The catalysed reaction is a plastoquinone + NADH + (n+1) H(+)(in) = a plastoquinol + NAD(+) + n H(+)(out). It carries out the reaction a plastoquinone + NADPH + (n+1) H(+)(in) = a plastoquinol + NADP(+) + n H(+)(out). NDH shuttles electrons from NAD(P)H:plastoquinone, via FMN and iron-sulfur (Fe-S) centers, to quinones in the photosynthetic chain and possibly in a chloroplast respiratory chain. The immediate electron acceptor for the enzyme in this species is believed to be plastoquinone. Couples the redox reaction to proton translocation, and thus conserves the redox energy in a proton gradient. The polypeptide is NAD(P)H-quinone oxidoreductase subunit I, chloroplastic (Encelia californica (Bush sunflower)).